Reading from the N-terminus, the 169-residue chain is CRISPR system Cmr subunit Cmr5 (169 aa).

Belongs to the CRISPR system Cmr5 family. As to quaternary structure, monomer in isolation. Part of the type III-B Cmr ribonucleoprotein (RNP) complex, an elongated RNP with Cmr2 and Cmr3 as the base, with Cmr4 and Cmr5 forming a helical core along the mature crRNA (39 or 45 nt in length), while the complex is capped by Cmr6 and Cmr1. The 5' end of the crRNA is bound to Cmr2 and Cmr3, while Cmr6 and a Cmr1 subunit (Cmr1-1 or Cmr1-2) cap the 3' end of the crRNA. The target RNA lies antiparallel to the crRNA, with its 5' end near Cmr1 and Cmr6 and its 3' end near Cmr2 and Cmr3; major target cleavage occurs nears the junction of Cmr1/Cmr6 and Cmr4/Cmr, with minor cleavage occurring at 6 nt intervals which coincide with the proposed spacing of Cmr4 subunits. Interacts with Cmr4. Interacts with Cmr2, Cmr4 and Cmr6.

The protein resides in the cytoplasm. Functionally, CRISPR (clustered regularly interspaced short palindromic repeat), is an adaptive immune system that provides protection against mobile genetic elements (viruses, transposable elements and conjugative plasmids). CRISPR clusters contain sequences complementary to antecedent mobile elements and target invading nucleic acids. CRISPR clusters are transcribed and processed into CRISPR RNA (crRNA), formerly called psiRNA (prokaryotic silencing) in this organism. Part of the Cmr ribonucleoprotein complex which has divalent cation-dependent endoribonuclease activity specific for ssRNA complementary to the crRNA (target NRA), generating 5' hydroxy- and 3' phosphate or 2'-3' cyclic phosphate termini. Cmr4 is probably the subunit that cleaves target RNA. Cmr complex does not cleave ssDNA complementary to the crRNA. Cleavage of invading RNA is guided by the crRNA; substrate cleavage occurs a fixed distance (14 nt) from the 3' end of the crRNA. In vitro reconstitution shows Cmr1-2 and Cmr5 are not absolutely necessary for target cleavage. The polypeptide is CRISPR system Cmr subunit Cmr5 (Pyrococcus furiosus (strain ATCC 43587 / DSM 3638 / JCM 8422 / Vc1)).